The sequence spans 234 residues: 2-C-methyl-D-erythritol 4-phosphate cytidylyltransferase (234 aa).

This sequence belongs to the IspD/TarI cytidylyltransferase family. IspD subfamily.

It catalyses the reaction 2-C-methyl-D-erythritol 4-phosphate + CTP + H(+) = 4-CDP-2-C-methyl-D-erythritol + diphosphate. It participates in isoprenoid biosynthesis; isopentenyl diphosphate biosynthesis via DXP pathway; isopentenyl diphosphate from 1-deoxy-D-xylulose 5-phosphate: step 2/6. In terms of biological role, catalyzes the formation of 4-diphosphocytidyl-2-C-methyl-D-erythritol from CTP and 2-C-methyl-D-erythritol 4-phosphate (MEP). This Photobacterium profundum (strain SS9) protein is 2-C-methyl-D-erythritol 4-phosphate cytidylyltransferase.